Reading from the N-terminus, the 294-residue chain is Indole-3-glycerol phosphate synthase (294 aa).

Belongs to the TrpC family.

It carries out the reaction 1-(2-carboxyphenylamino)-1-deoxy-D-ribulose 5-phosphate + H(+) = (1S,2R)-1-C-(indol-3-yl)glycerol 3-phosphate + CO2 + H2O. It functions in the pathway amino-acid biosynthesis; L-tryptophan biosynthesis; L-tryptophan from chorismate: step 4/5. The protein is Indole-3-glycerol phosphate synthase of Synechococcus sp. (strain RCC307).